A 182-amino-acid chain; its full sequence is Orotate phosphoribosyltransferase (182 aa).

Residues arginine 96, lysine 97, lysine 100, histidine 102, and 122 to 130 (EDTSTTGGS) contribute to the 5-phospho-alpha-D-ribose 1-diphosphate site. Orotate contacts are provided by threonine 126 and arginine 154.

Belongs to the purine/pyrimidine phosphoribosyltransferase family. PyrE subfamily. Homodimer. Mg(2+) serves as cofactor.

It carries out the reaction orotidine 5'-phosphate + diphosphate = orotate + 5-phospho-alpha-D-ribose 1-diphosphate. It participates in pyrimidine metabolism; UMP biosynthesis via de novo pathway; UMP from orotate: step 1/2. In terms of biological role, catalyzes the transfer of a ribosyl phosphate group from 5-phosphoribose 1-diphosphate to orotate, leading to the formation of orotidine monophosphate (OMP). In Streptomyces avermitilis (strain ATCC 31267 / DSM 46492 / JCM 5070 / NBRC 14893 / NCIMB 12804 / NRRL 8165 / MA-4680), this protein is Orotate phosphoribosyltransferase.